Here is a 697-residue protein sequence, read N- to C-terminus: Potassium-transporting ATPase ATP-binding subunit (697 aa).

4 helical membrane-spanning segments follow: residues 36-56 (VMFV…RDLI), 66-86 (LQII…EAVA), 218-238 (IALN…TATI), and 253-273 (VLVA…LSAI). D306 serves as the catalytic 4-aspartylphosphate intermediate. Residues D343, E347, 376–383 (FTAQTRMS), and K394 each bind ATP. 2 residues coordinate Mg(2+): D526 and D530. 3 consecutive transmembrane segments (helical) span residues 595 to 615 (YFAI…QSTG), 631 to 651 (AILS…PLSL), and 669 to 689 (LLVY…IIDM).

This sequence belongs to the cation transport ATPase (P-type) (TC 3.A.3) family. Type IA subfamily. As to quaternary structure, the system is composed of three essential subunits: KdpA, KdpB and KdpC.

It localises to the cell inner membrane. It catalyses the reaction K(+)(out) + ATP + H2O = K(+)(in) + ADP + phosphate + H(+). Functionally, part of the high-affinity ATP-driven potassium transport (or Kdp) system, which catalyzes the hydrolysis of ATP coupled with the electrogenic transport of potassium into the cytoplasm. This subunit is responsible for energy coupling to the transport system and for the release of the potassium ions to the cytoplasm. The polypeptide is Potassium-transporting ATPase ATP-binding subunit (Mesorhizobium japonicum (strain LMG 29417 / CECT 9101 / MAFF 303099) (Mesorhizobium loti (strain MAFF 303099))).